Consider the following 331-residue polypeptide: Phosphoenolpyruvate transferase (331 aa).

A 7,8-didemethyl-8-hydroxy-5-deazariboflavin-binding site is contributed by D63.

It belongs to the CofD family. Homodimer. The cofactor is Mg(2+).

It carries out the reaction enolpyruvoyl-2-diphospho-5'-guanosine + 7,8-didemethyl-8-hydroxy-5-deazariboflavin = dehydro coenzyme F420-0 + GMP + H(+). The protein operates within cofactor biosynthesis; coenzyme F420 biosynthesis. Its function is as follows. Catalyzes the transfer of the phosphoenolpyruvate moiety from enoylpyruvoyl-2-diphospho-5'-guanosine (EPPG) to 7,8-didemethyl-8-hydroxy-5-deazariboflavin (FO) with the formation of dehydro coenzyme F420-0 and GMP. This chain is Phosphoenolpyruvate transferase, found in Mycobacterium sp. (strain JLS).